A 175-amino-acid chain; its full sequence is Large ribosomal subunit protein uL10 (175 aa).

It belongs to the universal ribosomal protein uL10 family. As to quaternary structure, part of the ribosomal stalk of the 50S ribosomal subunit. The N-terminus interacts with L11 and the large rRNA to form the base of the stalk. The C-terminus forms an elongated spine to which L12 dimers bind in a sequential fashion forming a multimeric L10(L12)X complex.

Forms part of the ribosomal stalk, playing a central role in the interaction of the ribosome with GTP-bound translation factors. The chain is Large ribosomal subunit protein uL10 from Xylella fastidiosa (strain M12).